The chain runs to 294 residues: Homoserine kinase (294 aa).

84-94 (PFSRGLGSSSA) contacts ATP.

Belongs to the GHMP kinase family. Homoserine kinase subfamily.

It is found in the cytoplasm. The enzyme catalyses L-homoserine + ATP = O-phospho-L-homoserine + ADP + H(+). The protein operates within amino-acid biosynthesis; L-threonine biosynthesis; L-threonine from L-aspartate: step 4/5. Functionally, catalyzes the ATP-dependent phosphorylation of L-homoserine to L-homoserine phosphate. This is Homoserine kinase from Campylobacter concisus (strain 13826).